A 507-amino-acid chain; its full sequence is Eukaryotic translation initiation factor 4E-binding protein Mextli homolog (507 aa).

Residues 126 to 163 (RPEGQHDPAPTVGIPPSATSPPTQVTSSVTSPVPSSPQ) are disordered. Residues 140–158 (PPSATSPPTQVTSSVTSPV) show a composition bias toward low complexity. Residues 242–307 (QLRHEMIIRN…EDIERAKDMI (66 aa)) enclose the KH domain. Disordered stretches follow at residues 314 to 360 (NMSP…DEDI) and 395 to 424 (ARPSAEEREKKKERRKSMPLQQTARDQQEP). A compositionally biased stretch (polar residues) spans 329–348 (QYSGMSSENQSIPSQQNTAN). A compositionally biased stretch (acidic residues) spans 349–360 (IDEDDDDDDEDI).

Interacts with eukaryotic translation initiation factor ife-3.

The protein resides in the cytoplasm. Plays a role in promoting translation. The sequence is that of Eukaryotic translation initiation factor 4E-binding protein Mextli homolog from Caenorhabditis elegans.